A 333-amino-acid chain; its full sequence is Anthranilate phosphoribosyltransferase (333 aa).

5-phospho-alpha-D-ribose 1-diphosphate contacts are provided by residues Gly81, 84 to 85, Thr89, 91 to 94, 109 to 117, and Ala121; these read GN, NIST, and KHGNRSVSS. Residue Gly81 participates in anthranilate binding. Ser93 serves as a coordination point for Mg(2+). Residue Asn112 participates in anthranilate binding. Anthranilate is bound at residue Arg167. Asp225 and Glu226 together coordinate Mg(2+).

It belongs to the anthranilate phosphoribosyltransferase family. As to quaternary structure, homodimer. It depends on Mg(2+) as a cofactor.

It catalyses the reaction N-(5-phospho-beta-D-ribosyl)anthranilate + diphosphate = 5-phospho-alpha-D-ribose 1-diphosphate + anthranilate. Its pathway is amino-acid biosynthesis; L-tryptophan biosynthesis; L-tryptophan from chorismate: step 2/5. Functionally, catalyzes the transfer of the phosphoribosyl group of 5-phosphorylribose-1-pyrophosphate (PRPP) to anthranilate to yield N-(5'-phosphoribosyl)-anthranilate (PRA). This is Anthranilate phosphoribosyltransferase from Haemophilus influenzae (strain ATCC 51907 / DSM 11121 / KW20 / Rd).